Here is a 1721-residue protein sequence, read N- to C-terminus: Ras guanine nucleotide exchange factor R (1721 aa).

Residues Gln-148–Ser-279 adopt a coiled-coil conformation. 6 disordered regions span residues Gln-213–Lys-232, Ser-445–Pro-515, Ala-551–Gln-701, Arg-716–Ser-766, Thr-797–Lys-837, and Asp-929–Ser-981. Residues Lys-216–Lys-232 show a composition bias toward basic and acidic residues. Low complexity-rich tracts occupy residues Ser-454–Glu-469, His-479–Asn-493, Pro-501–Pro-515, and Ala-551–Ser-581. The segment covering Asn-618–Glu-627 has biased composition (polar residues). 2 stretches are compositionally biased toward low complexity: residues Ser-628–Ile-651 and Thr-663–Asp-686. Residues Lys-687–Gln-701 show a composition bias toward basic and acidic residues. Low complexity-rich tracts occupy residues Ser-724–Ser-748, Thr-797–Asn-836, and Glu-933–Ser-952. Residues Asn-802–Ile-831 are a coiled coil. The segment covering Asn-968 to Asp-978 has biased composition (polar residues). The N-terminal Ras-GEF domain maps to Gly-1291 to Glu-1411. One can recognise a Ras-GEF domain in the interval Asn-1447–Arg-1676.

Phosphorylated on threonine residues.

Promotes the exchange of Ras-bound GDP by GTP. May also play a role in the activation of rasG. In Dictyostelium discoideum (Social amoeba), this protein is Ras guanine nucleotide exchange factor R (gefR).